Reading from the N-terminus, the 125-residue chain is Small ribosomal subunit protein bS6 (125 aa).

Belongs to the bacterial ribosomal protein bS6 family.

Functionally, binds together with bS18 to 16S ribosomal RNA. The sequence is that of Small ribosomal subunit protein bS6 from Baumannia cicadellinicola subsp. Homalodisca coagulata.